A 193-amino-acid chain; its full sequence is Cyanate hydratase (193 aa).

Residues Arg121, Glu124, and Ser147 contribute to the active site.

Belongs to the cyanase family.

It catalyses the reaction cyanate + hydrogencarbonate + 3 H(+) = NH4(+) + 2 CO2. Its function is as follows. Catalyzes the reaction of cyanate with bicarbonate to produce ammonia and carbon dioxide. The sequence is that of Cyanate hydratase from Phaeodactylum tricornutum (strain CCAP 1055/1).